The following is a 201-amino-acid chain: Peptidyl-tRNA hydrolase (201 aa).

Tyr-17 is a tRNA binding site. The active-site Proton acceptor is the His-22. Positions 76, 78, and 124 each coordinate tRNA.

The protein belongs to the PTH family. Monomer.

It localises to the cytoplasm. It catalyses the reaction an N-acyl-L-alpha-aminoacyl-tRNA + H2O = an N-acyl-L-amino acid + a tRNA + H(+). Hydrolyzes ribosome-free peptidyl-tRNAs (with 1 or more amino acids incorporated), which drop off the ribosome during protein synthesis, or as a result of ribosome stalling. Functionally, catalyzes the release of premature peptidyl moieties from peptidyl-tRNA molecules trapped in stalled 50S ribosomal subunits, and thus maintains levels of free tRNAs and 50S ribosomes. This is Peptidyl-tRNA hydrolase from Oleidesulfovibrio alaskensis (strain ATCC BAA-1058 / DSM 17464 / G20) (Desulfovibrio alaskensis).